The sequence spans 295 residues: Small ribosomal subunit protein uS3 (295 aa).

A KH type-2 domain is found at 39–107; the sequence is VREYLKKKLK…PVAVNIEEVR (69 aa). Residues 213-295 are disordered; that stretch reads GTGAKMIEVA…AAAADGAKTE (83 aa). Residues 224-245 show a composition bias toward basic and acidic residues; sequence EERKPRGPRRDARPGDRPDRGA. 2 stretches are compositionally biased toward low complexity: residues 246 to 255 and 283 to 295; these read PRGAPRAPRG and AAPA…AKTE.

This sequence belongs to the universal ribosomal protein uS3 family. In terms of assembly, part of the 30S ribosomal subunit. Forms a tight complex with proteins S10 and S14.

Functionally, binds the lower part of the 30S subunit head. Binds mRNA in the 70S ribosome, positioning it for translation. This chain is Small ribosomal subunit protein uS3, found in Polaromonas naphthalenivorans (strain CJ2).